Consider the following 227-residue polypeptide: Large ribosomal subunit protein uL1 (227 aa).

It belongs to the universal ribosomal protein uL1 family. In terms of assembly, part of the 50S ribosomal subunit.

Its function is as follows. Binds directly to 23S rRNA. The L1 stalk is quite mobile in the ribosome, and is involved in E site tRNA release. Protein L1 is also a translational repressor protein, it controls the translation of the L11 operon by binding to its mRNA. The chain is Large ribosomal subunit protein uL1 from Mesoplasma florum (strain ATCC 33453 / NBRC 100688 / NCTC 11704 / L1) (Acholeplasma florum).